The following is a 426-amino-acid chain: Enolase (426 aa).

Gln-162 provides a ligand contact to (2R)-2-phosphoglycerate. Glu-204 (proton donor) is an active-site residue. Mg(2+) contacts are provided by Asp-241, Glu-288, and Asp-315. The (2R)-2-phosphoglycerate site is built by Lys-340, Arg-369, Ser-370, and Lys-391. Lys-340 functions as the Proton acceptor in the catalytic mechanism.

Belongs to the enolase family. Mg(2+) serves as cofactor.

The protein localises to the cytoplasm. The protein resides in the secreted. It is found in the cell surface. The catalysed reaction is (2R)-2-phosphoglycerate = phosphoenolpyruvate + H2O. It participates in carbohydrate degradation; glycolysis; pyruvate from D-glyceraldehyde 3-phosphate: step 4/5. Its function is as follows. Catalyzes the reversible conversion of 2-phosphoglycerate (2-PG) into phosphoenolpyruvate (PEP). It is essential for the degradation of carbohydrates via glycolysis. The polypeptide is Enolase (Bacteroides thetaiotaomicron (strain ATCC 29148 / DSM 2079 / JCM 5827 / CCUG 10774 / NCTC 10582 / VPI-5482 / E50)).